Reading from the N-terminus, the 691-residue chain is 1,4-alpha-glucan-branching enzyme (691 aa).

(1,4-alpha-D-glucosyl)n-binding residues include Trp-80 and Lys-116. The active-site Nucleophile is Asp-333. Glu-398 serves as the catalytic Proton donor.

It belongs to the glycosyl hydrolase 13 family. GlgB subfamily.

It localises to the cytoplasm. The enzyme catalyses Transfers a segment of a (1-&gt;4)-alpha-D-glucan chain to a primary hydroxy group in a similar glucan chain.. The protein operates within glycan biosynthesis; glycogen biosynthesis. In terms of biological role, glycogen-branching enzyme participates in the glycogen biosynthetic process along with glycogenin and glycogen synthase. Generates alpha-1,6-glucosidic branches from alpha-1,4-linked glucose chains, to increase solubility of the glycogen polymer. This is 1,4-alpha-glucan-branching enzyme (GLC3) from Yarrowia lipolytica (strain CLIB 122 / E 150) (Yeast).